The chain runs to 249 residues: Proteasome subunit alpha type-7 (249 aa).

This sequence belongs to the peptidase T1A family. As to quaternary structure, the 26S proteasome consists of a 20S proteasome core and two 19S regulatory subunits. The 20S proteasome core is a barrel-shaped complex made of 28 subunits that are arranged in four stacked rings. The two outer rings are each formed by seven alpha subunits, and the two inner rings are formed by seven beta subunits. The proteolytic activity is exerted by three beta-subunits PSMB5, PSMB6 and PSMB7. PSMA7 interacts directly with the PSMG1-PSMG2 heterodimer which promotes 20S proteasome assembly. Interacts with HIF1A. Interacts with RAB7A. Interacts with PRKN. Interacts with ABL1 and ABL2. Interacts with EMAP2. Interacts with MAVS.

It is found in the cytoplasm. It localises to the nucleus. In terms of biological role, component of the 20S core proteasome complex involved in the proteolytic degradation of most intracellular proteins. This complex plays numerous essential roles within the cell by associating with different regulatory particles. Associated with two 19S regulatory particles, forms the 26S proteasome and thus participates in the ATP-dependent degradation of ubiquitinated proteins. The 26S proteasome plays a key role in the maintenance of protein homeostasis by removing misfolded or damaged proteins that could impair cellular functions, and by removing proteins whose functions are no longer required. Associated with the PA200 or PA28, the 20S proteasome mediates ubiquitin-independent protein degradation. This type of proteolysis is required in several pathways including spermatogenesis (20S-PA200 complex) or generation of a subset of MHC class I-presented antigenic peptides (20S-PA28 complex). Inhibits the transactivation function of HIF-1A under both normoxic and hypoxia-mimicking conditions. The interaction with EMAP2 increases the proteasome-mediated HIF-1A degradation under the hypoxic conditions. Plays a role in hepatitis C virus internal ribosome entry site-mediated translation. Mediates nuclear translocation of the androgen receptor (AR) and thereby enhances androgen-mediated transactivation. Promotes MAVS degradation and thereby negatively regulates MAVS-mediated innate immune response. This is Proteasome subunit alpha type-7 (PSMA7) from Gallus gallus (Chicken).